Reading from the N-terminus, the 422-residue chain is Metallocarboxypeptidase A-like protein TRV_02598 (422 aa).

The signal sequence occupies residues Met1–Gly16. The propeptide at Gly17–Asn119 is activation peptide. In terms of domain architecture, Peptidase M14 spans Ser125–Leu421. Zn(2+) is bound by residues His185 and Glu188. Residues His185–Glu188, Arg240, and Asn256–Arg257 contribute to the substrate site. Residues Cys250 and Cys273 are joined by a disulfide bond. His311 contributes to the Zn(2+) binding site. Ser312–Tyr313 lines the substrate pocket. Catalysis depends on Glu387, which acts as the Proton donor/acceptor.

Belongs to the peptidase M14 family. It depends on Zn(2+) as a cofactor.

The protein localises to the secreted. In terms of biological role, extracellular metalloprotease that contributes to pathogenicity. The protein is Metallocarboxypeptidase A-like protein TRV_02598 of Trichophyton verrucosum (strain HKI 0517).